Reading from the N-terminus, the 244-residue chain is uncharacterized protein (244 aa).

The next 2 helical transmembrane spans lie at 29 to 49 and 139 to 159; these read WIPW…TQHM and LGMK…ATVI.

Belongs to the FMP10 family.

It localises to the mitochondrion membrane. This is an uncharacterized protein from Saccharomyces cerevisiae (strain ATCC 204508 / S288c) (Baker's yeast).